Here is a 497-residue protein sequence, read N- to C-terminus: Galactose/methyl galactoside import ATP-binding protein MglA (497 aa).

ABC transporter domains follow at residues 6 to 241 (LEIK…VGRS) and 252 to 497 (VPGE…AKYL). 38–45 (GENGAGKS) provides a ligand contact to ATP.

Belongs to the ABC transporter superfamily. Galactose/methyl galactoside importer (TC 3.A.1.2.3) family. As to quaternary structure, the complex is composed of one ATP-binding protein (MglA), two transmembrane proteins (MglC) and a solute-binding protein (MglB).

The protein localises to the cell inner membrane. It catalyses the reaction D-galactose(out) + ATP + H2O = D-galactose(in) + ADP + phosphate + H(+). The catalysed reaction is methyl beta-D-galactoside(out) + ATP + H2O = methyl beta-D-galactoside(in) + ADP + phosphate + H(+). Its function is as follows. Part of the ABC transporter complex MglABC involved in galactose/methyl galactoside import. Responsible for energy coupling to the transport system. The protein is Galactose/methyl galactoside import ATP-binding protein MglA of Treponema denticola (strain ATCC 35405 / DSM 14222 / CIP 103919 / JCM 8153 / KCTC 15104).